Reading from the N-terminus, the 383-residue chain is MKRLTLLGSTGSIGVNTLKVVSRFCDRFSVEALCARGSVDTLAEQVQRFSPSLAVVIDAPTAQALKERLPAGSRTEVLFGEAGYCHAVSLPGVDMVVSAMVGAAGLGPTIAAIKAGKAVALANKEVLVMAGETVMALAAQKGVPLLPIDSEHSAIFQCLQGNDKTFLSKIHLTASGGPFLNKTRQEIETATPEQALAHPTWTMGKKISIDSATLMNKGLEVIEARFLFDVPADCIEVVVHPQSIIHSMVSYIDGSMMAQLSVPDMKGAIAYALSYPERLDLNQPAPDLAALEQLTFFSPDLDRFPCLGLAFEACRRKKTFPAVLNAANEVAVDAFLREAIPFGRIPRVIEQVLAEHTGVTDPSLSDIKDADAWARQRAGALLP.

NADPH-binding residues include Thr10, Gly11, Ser12, Ile13, and Asn123. Lys124 is a 1-deoxy-D-xylulose 5-phosphate binding site. Glu125 contacts NADPH. Mn(2+) is bound at residue Asp149. 1-deoxy-D-xylulose 5-phosphate-binding residues include Ser150, Glu151, Ser175, and His198. A Mn(2+)-binding site is contributed by Glu151. Gly204 contacts NADPH. 4 residues coordinate 1-deoxy-D-xylulose 5-phosphate: Ser211, Asn216, Lys217, and Glu220. Glu220 serves as a coordination point for Mn(2+).

This sequence belongs to the DXR family. Mg(2+) is required as a cofactor. The cofactor is Mn(2+).

It catalyses the reaction 2-C-methyl-D-erythritol 4-phosphate + NADP(+) = 1-deoxy-D-xylulose 5-phosphate + NADPH + H(+). The protein operates within isoprenoid biosynthesis; isopentenyl diphosphate biosynthesis via DXP pathway; isopentenyl diphosphate from 1-deoxy-D-xylulose 5-phosphate: step 1/6. Its function is as follows. Catalyzes the NADPH-dependent rearrangement and reduction of 1-deoxy-D-xylulose-5-phosphate (DXP) to 2-C-methyl-D-erythritol 4-phosphate (MEP). This is 1-deoxy-D-xylulose 5-phosphate reductoisomerase from Desulfosudis oleivorans (strain DSM 6200 / JCM 39069 / Hxd3) (Desulfococcus oleovorans).